We begin with the raw amino-acid sequence, 77 residues long: Small ribosomal subunit protein uS17 (77 aa).

This sequence belongs to the universal ribosomal protein uS17 family. In terms of assembly, part of the 30S ribosomal subunit.

Its function is as follows. One of the primary rRNA binding proteins, it binds specifically to the 5'-end of 16S ribosomal RNA. The protein is Small ribosomal subunit protein uS17 of Rickettsia canadensis (strain McKiel).